The primary structure comprises 358 residues: DNA ligase C (358 aa).

The N6-AMP-lysine intermediate role is filled by K29.

This sequence belongs to the ATP-dependent DNA ligase family. Requires a divalent metal cation as cofactor.

The catalysed reaction is ATP + (deoxyribonucleotide)n-3'-hydroxyl + 5'-phospho-(deoxyribonucleotide)m = (deoxyribonucleotide)n+m + AMP + diphosphate.. Its function is as follows. DNA ligase that seals nicks in double-stranded DNA during DNA replication, DNA recombination and DNA repair. In Mycobacterium tuberculosis (strain ATCC 25618 / H37Rv), this protein is DNA ligase C (ligC).